Reading from the N-terminus, the 193-residue chain is Ion-translocating oxidoreductase complex subunit A (193 aa).

6 helical membrane passes run 5–25 (LLLF…FLGL), 47–67 (FVMT…LIPL), 72–92 (LRTL…EMVV), 102–122 (LLGI…VALL), 134–154 (ALYG…FAAI), and 171–191 (AIAL…SGLV).

Belongs to the NqrDE/RnfAE family. The complex is composed of six subunits: RsxA, RsxB, RsxC, RsxD, RsxE and RsxG.

It localises to the cell inner membrane. Part of a membrane-bound complex that couples electron transfer with translocation of ions across the membrane. Required to maintain the reduced state of SoxR. The polypeptide is Ion-translocating oxidoreductase complex subunit A (Salmonella agona (strain SL483)).